A 1336-amino-acid polypeptide reads, in one-letter code: Lysine-specific demethylase 2B (1336 aa).

The tract at residues 1-25 (MAGPQMGGSAEDHPPRKRHAAEKQK) is disordered. A compositionally biased stretch (basic residues) spans 15–25 (PRKRHAAEKQK). At serine 57 the chain carries Phosphoserine. In terms of domain architecture, JmjC spans 178–346 (FSHTKLEHLV…MQLRIYEIED (169 aa)). Residue threonine 239 coordinates substrate. Histidine 242 and aspartate 244 together coordinate Fe cation. Lysine 259 is a binding site for substrate. Histidine 314 provides a ligand contact to Fe cation. Positions 410-430 (MEEEACDQQPQEEEEKDEEGE) are enriched in acidic residues. Residues 410–465 (MEEEACDQQPQEEEEKDEEGEGRDRAPKPPTDGSTSPTSTPSEDQEALGKKPKAPA) form a disordered region. Low complexity predominate over residues 440-451 (TDGSTSPTSTPS). 2 positions are modified to phosphoserine: serine 474 and serine 477. Threonine 493 carries the phosphothreonine modification. At serine 497 the chain carries Phosphoserine. The segment at 606-652 (ARRRRTRCRKCEACLRTECGECHFCKDMKKFGGPGRMKQSCIMRQCI) adopts a CXXC-type zinc-finger fold. Cysteine 613, cysteine 616, cysteine 619, cysteine 624, cysteine 627, cysteine 630, cysteine 646, cysteine 651, cysteine 662, cysteine 665, cysteine 688, cysteine 691, histidine 696, cysteine 699, cysteine 719, and cysteine 722 together coordinate Zn(2+). The PHD-type zinc finger occupies 659-725 (TAVCLVCGEA…CWECPKCNHA (67 aa)). Disordered regions lie at residues 727–843 (KTGK…SLSP) and 855–1034 (QLKP…SPPK). The span at 749 to 799 (KEQKMNRDNKEGQEPAKRRSECEEAPRRRSDEHSKKVPPDGLLRRKSDDVH) shows a compositional bias: basic and acidic residues. A compositionally biased stretch (low complexity) spans 819 to 843 (SSLQTSPGSSSHLSPRPPLGSSLSP). Glycyl lysine isopeptide (Lys-Gly) (interchain with G-Cter in SUMO2) cross-links involve residues lysine 857 and lysine 890. The segment covering 902-911 (PKTRESDHSR) has biased composition (basic and acidic residues). The segment covering 932–941 (KVKMRRKRRL) has biased composition (basic residues). A compositionally biased stretch (basic and acidic residues) spans 942–960 (PNKELSRELSKELNHEIQR). Residues 943-971 (NKELSRELSKELNHEIQRTENSLANENQQ) are a coiled coil. At serine 951 the chain carries Phosphoserine. A compositionally biased stretch (polar residues) spans 961 to 971 (TENSLANENQQ). A phosphoserine mark is found at serine 975, serine 979, serine 1018, and serine 1031. Low complexity predominate over residues 1014 to 1024 (PSLRSPPRVIS). Positions 1059 to 1105 (DGAAHVMHREVWMAVFSYLSHQDLCVCMRVCRTWNRWCCDKRLWTRI) constitute an F-box domain. LRR repeat units lie at residues 1093-1120 (NRWCCDKRLWTRIDLNHCKSITPLMLSG), 1133-1154 (WTNISKKQLSWLINRLPGLRDL), 1156-1182 (LSGCSWIAVSALCSSSCPLLRTLDVQW), 1222-1247 (GLDITDASLRLIIRHMPLLSKLHLSY), 1248-1277 (CNHVTDQSINLLTAVGTTTRDSLTEINLSD), 1278-1302 (CNKVTDQCLSFFKRCGNICHIDLRY), and 1303-1336 (CKQVTKEGCEQFIAEMSVSVQFGQVEEKLLQKLS).

This sequence belongs to the JHDM1 histone demethylase family. As to quaternary structure, interacts with SKP1, forming heterodimers. The heterodimeric KDM2B-SKP1 complex interacts with the PCGF1-BCORL1 heterodimeric complex to form a homotetrameric polycomb repression complex 1 (PRC1.1). Directly interacts with CUL1. The SKP1-KDM2B complex interacts with UBB. It depends on Fe(2+) as a cofactor.

The protein localises to the nucleus. It localises to the nucleolus. The protein resides in the chromosome. It carries out the reaction N(6),N(6)-dimethyl-L-lysyl(36)-[histone H3] + 2 2-oxoglutarate + 2 O2 = L-lysyl(36)-[histone H3] + 2 formaldehyde + 2 succinate + 2 CO2. Its activity is regulated as follows. Histone demethylase activity is inhibited by fumarate. Functionally, histone demethylase that demethylates 'Lys-4' and 'Lys-36' of histone H3, thereby playing a central role in histone code. Preferentially demethylates trimethylated H3 'Lys-4' and dimethylated H3 'Lys-36' residue while it has weak or no activity for mono- and tri-methylated H3 'Lys-36'. Preferentially binds the transcribed region of ribosomal RNA and represses the transcription of ribosomal RNA genes which inhibits cell growth and proliferation. May also serve as a substrate-recognition component of the SCF (SKP1-CUL1-F-box protein)-type E3 ubiquitin ligase complex. The sequence is that of Lysine-specific demethylase 2B (KDM2B) from Homo sapiens (Human).